The following is a 349-amino-acid chain: MVEKEEVSGGGGGISEEEAAQYDRQIRLWGLEAQKRLRASRVLIVGMKGLGAEIAKNLILAGVKGLTMLDHEQVSPEDLGAQFLIRTGSVGQNRAEASLERAQNLNPMVDVKVDTEDIEKKPESFFTEFDAVCLTCCSKDVIIKVDQICHRNSIKFFTGDVFGYHGYTFANLGEHEFVEEKTKVTKVSQGVEDGPDAKRAKLDSSETTMVKKKVLFCPVKEALAVDWSGEKAQAALKRTAPDYFLLQVLLKFRTDKGRDPTSDSYSEDAELLLQIRNDVFDSLGVSPDLLPDDFVRYCFSEMAPVCAVVGGILAQEIVKALSQRDPPHNNFFFFDGMKGSGIVECLGPQ.

Residue Met1 is modified to N-acetylmethionine. N-acetylvaline; in SUMO-activating enzyme subunit 1, N-terminally processed is present on Val2. Position 15 is a phosphoserine (Ser15). Lys201 is subject to N6-acetyllysine.

This sequence belongs to the ubiquitin-activating E1 family. Heterodimer of SAE1 and UBA2/SAE2. The heterodimer corresponds to the two domains that are encoded on a single polypeptide chain in ubiquitin-activating enzyme E1. Interacts with UBE2I.

The protein resides in the nucleus. Its pathway is protein modification; protein sumoylation. In terms of biological role, the heterodimer acts as an E1 ligase for SUMO1, SUMO2, SUMO3, and probably SUMO4. It mediates ATP-dependent activation of SUMO proteins followed by formation of a thioester bond between a SUMO protein and a conserved active site cysteine residue on UBA2/SAE2. The sequence is that of SUMO-activating enzyme subunit 1 (Sae1) from Rattus norvegicus (Rat).